The chain runs to 210 residues: Mediator of RNA polymerase II transcription subunit 20 (210 aa).

It belongs to the Mediator complex subunit 20 family. In terms of assembly, component of the Mediator complex, which is composed of at least 21 subunits that form three structurally distinct submodules. The Mediator head module contains MED6, MED8, MED11, SRB4/MED17, SRB5/MED18, ROX3/MED19, SRB2/MED20 and SRB6/MED22, the middle module contains MED1, MED4, NUT1/MED5, MED7, CSE2/MED9, NUT2/MED10, SRB7/MED21 and SOH1/MED31, and the tail module contains MED2, PGD1/MED3, RGR1/MED14, GAL11/MED15 and SIN4/MED16. The head and the middle modules interact directly with RNA polymerase II, whereas the elongated tail module interacts with gene-specific regulatory proteins. MED1 interacts directly with MED4 and MED7. SRB2/MED20 interacts directly with SRB4/MED17 and SRB5/MED18.

The protein resides in the nucleus. Component of the Mediator complex, a coactivator involved in the regulated transcription of nearly all RNA polymerase II-dependent genes. Mediator functions as a bridge to convey information from gene-specific regulatory proteins to the basal RNA polymerase II transcription machinery. The Mediator complex, having a compact conformation in its free form, is recruited to promoters by direct interactions with regulatory proteins and serves for the assembly of a functional preinitiation complex with RNA polymerase II and the general transcription factors. The Mediator complex unfolds to an extended conformation and partially surrounds RNA polymerase II, specifically interacting with the unphosphorylated form of the C-terminal domain (CTD) of RNA polymerase II. The Mediator complex dissociates from the RNA polymerase II holoenzyme and stays at the promoter when transcriptional elongation begins. In Saccharomyces cerevisiae (strain ATCC 204508 / S288c) (Baker's yeast), this protein is Mediator of RNA polymerase II transcription subunit 20 (SRB2).